Reading from the N-terminus, the 213-residue chain is Large ribosomal subunit protein uL3 (213 aa).

Residues 124–151 are disordered; the sequence is KRHGQSRGPMAHGSRYHRRPGSMGSIAP.

Belongs to the universal ribosomal protein uL3 family. As to quaternary structure, part of the 50S ribosomal subunit. Forms a cluster with proteins L14 and L19.

In terms of biological role, one of the primary rRNA binding proteins, it binds directly near the 3'-end of the 23S rRNA, where it nucleates assembly of the 50S subunit. The chain is Large ribosomal subunit protein uL3 from Geobacillus kaustophilus (strain HTA426).